Reading from the N-terminus, the 253-residue chain is Triosephosphate isomerase (253 aa).

9-11 (NWK) is a binding site for substrate. The active-site Electrophile is the His-96. Catalysis depends on Glu-168, which acts as the Proton acceptor. Residues Gly-174, Ser-213, and 234 to 235 (GG) each bind substrate.

Belongs to the triosephosphate isomerase family. In terms of assembly, homodimer.

The protein resides in the cytoplasm. It catalyses the reaction D-glyceraldehyde 3-phosphate = dihydroxyacetone phosphate. The protein operates within carbohydrate biosynthesis; gluconeogenesis. Its pathway is carbohydrate degradation; glycolysis; D-glyceraldehyde 3-phosphate from glycerone phosphate: step 1/1. Functionally, involved in the gluconeogenesis. Catalyzes stereospecifically the conversion of dihydroxyacetone phosphate (DHAP) to D-glyceraldehyde-3-phosphate (G3P). This chain is Triosephosphate isomerase, found in Hydrogenovibrio crunogenus (strain DSM 25203 / XCL-2) (Thiomicrospira crunogena).